We begin with the raw amino-acid sequence, 274 residues long: Diaminopimelate epimerase (274 aa).

Residues Asn-11, Gln-44, and Asn-64 each coordinate substrate. Cys-73 (proton donor) is an active-site residue. Substrate is bound by residues 74–75, Asn-157, Asn-190, and 208–209; these read GN and ER. Cys-217 serves as the catalytic Proton acceptor. Substrate is bound at residue 218–219; sequence GS.

This sequence belongs to the diaminopimelate epimerase family. In terms of assembly, homodimer.

Its subcellular location is the cytoplasm. It carries out the reaction (2S,6S)-2,6-diaminopimelate = meso-2,6-diaminopimelate. It functions in the pathway amino-acid biosynthesis; L-lysine biosynthesis via DAP pathway; DL-2,6-diaminopimelate from LL-2,6-diaminopimelate: step 1/1. Its function is as follows. Catalyzes the stereoinversion of LL-2,6-diaminopimelate (L,L-DAP) to meso-diaminopimelate (meso-DAP), a precursor of L-lysine and an essential component of the bacterial peptidoglycan. In Escherichia coli O127:H6 (strain E2348/69 / EPEC), this protein is Diaminopimelate epimerase.